Consider the following 694-residue polypeptide: Soluble starch synthase 2-2, chloroplastic/amyloplastic (694 aa).

Residues 1 to 15 (MSGAIASSPAATLFL) constitute a chloroplast transit peptide. The interval 93-197 (KADHVEDSVS…DSENKESGPL (105 aa)) is disordered. Positions 127 to 142 (APVSKPKVDPSVPASK) are enriched in low complexity. Basic and acidic residues predominate over residues 156–176 (AALDKKEDVGVAEPLEAKADA). The span at 177 to 186 (GGDAGAVSSA) shows a compositional bias: low complexity. ADP-alpha-D-glucose is bound at residue K217.

This sequence belongs to the glycosyltransferase 1 family. Bacterial/plant glycogen synthase subfamily. In terms of tissue distribution, expressed in leaves and weakly in endosperm and roots.

The protein localises to the plastid. It is found in the amyloplast. The protein resides in the chloroplast. It catalyses the reaction [(1-&gt;4)-alpha-D-glucosyl](n) + ADP-alpha-D-glucose = [(1-&gt;4)-alpha-D-glucosyl](n+1) + ADP + H(+). Its pathway is glycan biosynthesis; starch biosynthesis. May contribute to the deposition of transient starch in chloroplasts of leaves. This is Soluble starch synthase 2-2, chloroplastic/amyloplastic (SSII-2) from Oryza sativa subsp. japonica (Rice).